The sequence spans 508 residues: 25-hydroxyvitamin D-1 alpha hydroxylase, mitochondrial (508 aa).

Cys-455 contacts heme.

This sequence belongs to the cytochrome P450 family. Requires heme as cofactor. In terms of tissue distribution, kidney.

Its subcellular location is the mitochondrion membrane. The enzyme catalyses calcidiol + 2 reduced [adrenodoxin] + O2 + 2 H(+) = calcitriol + 2 oxidized [adrenodoxin] + H2O. It catalyses the reaction secalciferol + 2 reduced [adrenodoxin] + O2 + 2 H(+) = calcitetrol + 2 oxidized [adrenodoxin] + H2O. The catalysed reaction is 25-hydroxy-24-oxocalciol + 2 reduced [adrenodoxin] + O2 + 2 H(+) = (1S)-1,25-dihydroxy-24-oxocalciol + 2 oxidized [adrenodoxin] + H2O. It carries out the reaction 25-hydroxyvitamin D2 + 2 reduced [adrenodoxin] + O2 + 2 H(+) = 1alpha,25-dihydroxyvitamin D2 + 2 oxidized [adrenodoxin] + H2O. The protein operates within hormone biosynthesis; vitamin D biosynthesis. Activated by cardiolipin and dioleoyl phosphatidylethanolamine (DOPE), phospholipids found in the inner mitochondrial membrane. Inhibited by high substrate concentration. A cytochrome P450 monooxygenase involved in vitamin D metabolism and in calcium and phosphorus homeostasis. Catalyzes the rate-limiting step in the activation of vitamin D in the kidney, namely the hydroxylation of 25-hydroxyvitamin D3/calcidiol at the C1alpha-position to form the hormonally active form of vitamin D3, 1alpha,25-dihydroxyvitamin D3/calcitriol that acts via the vitamin D receptor (VDR). Has 1alpha-hydroxylase activity on vitamin D intermediates of the CYP24A1-mediated inactivation pathway. Converts 24R,25-dihydroxyvitamin D3/secalciferol to 1-alpha,24,25-trihydroxyvitamin D3, an active ligand of VDR. Also active on 25-hydroxyvitamin D2. Mechanistically, uses molecular oxygen inserting one oxygen atom into a substrate, and reducing the second into a water molecule, with two electrons provided by NADPH via FDXR/adrenodoxin reductase and FDX1/adrenodoxin. In Homo sapiens (Human), this protein is 25-hydroxyvitamin D-1 alpha hydroxylase, mitochondrial (CYP27B1).